Consider the following 324-residue polypeptide: Olfactory receptor 4K15 (324 aa).

The Extracellular segment spans residues 1-25 (MNETNHSRVTEFVLLGLSSSRELQP). N-linked (GlcNAc...) asparagine glycans are attached at residues Asn2 and Asn5. Residues 26 to 49 (FLFLTFSLLYLAILLGNFLIILTV) form a helical membrane-spanning segment. The Cytoplasmic segment spans residues 50–57 (TSDSRLHT). A helical transmembrane segment spans residues 58-79 (PMYFLLANLSFIDVCVASFATP). The Extracellular portion of the chain corresponds to 80 to 100 (KMIADFLVERKTISFDACLAQ). Cys97 and Cys189 form a disulfide bridge. A helical transmembrane segment spans residues 101–120 (IFFVHLFTGSEMVLLVSMAY). The Cytoplasmic portion of the chain corresponds to 121 to 139 (DRYVAICKPLHYMTVMSRR). Residues 140–158 (VCVVLVLISWFVGFIHTTS) traverse the membrane as a helical segment. The Extracellular portion of the chain corresponds to 159 to 195 (QLAFTVNLPFCGPNKVDSFFCDLPLVTKLACIDTYVV). The chain crosses the membrane as a helical span at residues 196 to 219 (SLLIVADSGFLSLSSFLLLVVSYT). Topologically, residues 220-235 (VILVTVRNRSSASMAK) are cytoplasmic. Residues 236 to 258 (ARSTLTAHITVVTLFFGPCIFIY) form a helical membrane-spanning segment. Residues 259–269 (VWPFSSYSVDK) lie on the Extracellular side of the membrane. Residues 270–289 (VLAVFYTIFTLILNPVIYTL) traverse the membrane as a helical segment. Over 290–324 (RNKEVKAAMSKLKSRYLKPSQVSVVIRNVLFLETK) the chain is Cytoplasmic.

The protein belongs to the G-protein coupled receptor 1 family.

It localises to the cell membrane. Functionally, odorant receptor. This chain is Olfactory receptor 4K15 (OR4K15), found in Homo sapiens (Human).